Here is a 2243-residue protein sequence, read N- to C-terminus: Zinc finger FYVE domain-containing protein 26 homolog (2243 aa).

Disordered regions lie at residues 386–416 and 514–556; these read SQRK…RPTA and KKKA…GKAS. Acidic residues predominate over residues 393-408; it reads GENDEEDDEQYVDDDV. At tyrosine 403 the chain carries Phosphotyrosine. The span at 517 to 528 shows a compositional bias: basic and acidic residues; it reads ASSDDESRERSN. Residues 534–543 are compositionally biased toward basic residues; sequence NRRKARRQRR. One copy of the LRR 1 repeat lies at 617–644; that stretch reads KKIIETFHLEHSQLNRELHFMEQQQLVK. Position 1424 is a phosphoserine (serine 1424). The FYVE-type zinc finger occupies 1444 to 1500; sequence DEEASHCMCCRRAAFTMLMRRHHCRRCGRVVCYACSTHRIRIPELYDELEVRICNDC. Residues cysteine 1450, cysteine 1453, cysteine 1467, cysteine 1470, cysteine 1475, cysteine 1478, cysteine 1497, and cysteine 1500 each coordinate Zn(2+). The tract at residues 1505–1534 is disordered; it reads TPAKDQGDGTSSERSAISGQVSKSSGRSDS. Positions 1512–1534 are enriched in polar residues; that stretch reads DGTSSERSAISGQVSKSSGRSDS. The stretch at 1887–1912 is one LRR 2 repeat; that stretch reads YPQLANGGLNVLMDELQQLDDAQFTA.

It belongs to the ZFYVE26 family.

Functionally, phosphatidylinositol 3-phosphate (PtdIns[3]P)-binding protein. Involved in autophagy. In Drosophila melanogaster (Fruit fly), this protein is Zinc finger FYVE domain-containing protein 26 homolog.